A 393-amino-acid polypeptide reads, in one-letter code: Digeranylgeranylglycerophospholipid reductase 2 (393 aa).

Residues Asp33, Cys44, Ala45, Gly47, Arg100, Ala124, Asp280, Gly292, and Ile293 each contribute to the FAD site.

The protein belongs to the geranylgeranyl reductase family. DGGGPL reductase subfamily. The cofactor is FAD.

The enzyme catalyses a 2,3-bis-O-phytanyl-sn-glycerol 1-phospholipid + 8 A = a 2,3-bis-O-(geranylgeranyl)-sn-glycerol 1-phospholipid + 8 AH2. The catalysed reaction is 2,3-bis-O-(phytanyl)-sn-glycerol 1-phosphate + 8 A = 2,3-bis-O-(geranylgeranyl)-sn-glycerol 1-phosphate + 8 AH2. It catalyses the reaction CDP-2,3-bis-O-(geranylgeranyl)-sn-glycerol + 8 AH2 = CDP-2,3-bis-O-(phytanyl)-sn-glycerol + 8 A. It carries out the reaction archaetidylserine + 8 AH2 = 2,3-bis-O-phytanyl-sn-glycero-3-phospho-L-serine + 8 A. The protein operates within membrane lipid metabolism; glycerophospholipid metabolism. Functionally, is involved in the reduction of 2,3-digeranylgeranylglycerophospholipids (unsaturated archaeols) into 2,3-diphytanylglycerophospholipids (saturated archaeols) in the biosynthesis of archaeal membrane lipids. Catalyzes the formation of archaetidic acid (2,3-di-O-phytanyl-sn-glyceryl phosphate) from 2,3-di-O-geranylgeranylglyceryl phosphate (DGGGP) via the hydrogenation of each double bond of the isoprenoid chains. Is also probably able to reduce double bonds of geranyl groups in CDP-2,3-bis-O-(geranylgeranyl)-sn-glycerol and archaetidylserine, thus acting at various stages in the biosynthesis of archaeal membrane lipids. This Methanosphaera stadtmanae (strain ATCC 43021 / DSM 3091 / JCM 11832 / MCB-3) protein is Digeranylgeranylglycerophospholipid reductase 2.